Here is a 177-residue protein sequence, read N- to C-terminus: UPF0178 protein TP_0845 (177 aa).

Residues glutamate 155–arginine 177 are disordered.

The protein belongs to the UPF0178 family.

This is UPF0178 protein TP_0845 from Treponema pallidum (strain Nichols).